A 772-amino-acid polypeptide reads, in one-letter code: Polyribonucleotide nucleotidyltransferase (772 aa).

2 residues coordinate Mg(2+): Asp-486 and Asp-492. The 60-residue stretch at 553 to 612 folds into the KH domain; the sequence is PRIETLQIDKSKIRDVIGTGGKVIREIVATTGAKVDIDDEGLIKISSSDLTQIEAAKNWI. Positions 622–690 constitute an S1 motif domain; that stretch reads GKIYKGKVVN…QRGKVRLSMR (69 aa). Positions 695–772 are disordered; it reads ETGAELEDTR…HMPAFLKSDD (78 aa). Positions 701–760 are enriched in basic and acidic residues; sequence EDTRPPREPREPRGDRGDRGDRGDRRGPRGDRGPRREGGDRGPRREGGDRPRRDRDDGPA.

Belongs to the polyribonucleotide nucleotidyltransferase family. Requires Mg(2+) as cofactor.

Its subcellular location is the cytoplasm. It carries out the reaction RNA(n+1) + phosphate = RNA(n) + a ribonucleoside 5'-diphosphate. Involved in mRNA degradation. Catalyzes the phosphorolysis of single-stranded polyribonucleotides processively in the 3'- to 5'-direction. This is Polyribonucleotide nucleotidyltransferase from Novosphingobium aromaticivorans (strain ATCC 700278 / DSM 12444 / CCUG 56034 / CIP 105152 / NBRC 16084 / F199).